A 6306-amino-acid polypeptide reads, in one-letter code: Adhesion G-protein coupled receptor V1 (6306 aa).

The first 29 residues, 1-29 (MSVFLGPGMPSASLLVNLLSALLILFVFG), serve as a signal peptide directing secretion. 22 Calx-beta domains span residues 30 to 117 (ETEI…FHLT), 133 to 237 (VTVT…IQLK), 262 to 362 (PVRF…HIML), 388 to 488 (KPYG…LQIL), 645 to 745 (PAIA…TLSL), 763 to 861 (DLII…VVLS), 876 to 979 (VNIT…VILL), 993 to 1093 (ATLR…IILL), 1108 to 1208 (TVII…LKLV), 1444 to 1544 (AMPR…FILK), 1564 to 1665 (TIQK…RVTL), 1710 to 1809 (TGLP…VELL), 1850 to 1952 (ILVT…VSVL), 1966 to 2079 (TLTV…IELL), 2107 to 2206 (QLII…VQLM), 2222 to 2324 (VIII…VQLT), 2441 to 2541 (TLCL…FLIS), 2584 to 2676 (NISP…VSLV), 2689 to 2789 (DTVR…QVIL), 2814 to 2925 (LTVE…VNLT), 2947 to 3048 (TAQV…LILT), and 3063 to 3172 (LIIV…CTLF). The Extracellular portion of the chain corresponds to 30 to 5908 (ETEIRFTGQT…TDNLSSYNEA (5879 aa)). 6 EAR repeats span residues 3255 to 3296 (VFSV…RWQG), 3297 to 3345 (IFIP…TFTS), 3348 to 3393 (KLFL…RWNG), 3395 to 3439 (SFVL…RWSG), 3441 to 3488 (GFIN…IWEM), and 3492 to 3534 (SFRY…CWNS). Calx-beta domains follow at residues 3525–3625 (DMSA…KVQL), 3639–3739 (SVTI…IVTL), 3775–3875 (GLVG…VTIT), 3899–4006 (AEIM…ISLI), 4020–4123 (VTVV…IQLI), 4139–4239 (IIIR…EFQL), 4255–4354 (ANIT…LTIT), 4387–4489 (RIII…ILLT), 4512–4612 (SPFG…IIKL), 4634–4734 (EFGD…VIQL), 4992–5095 (SGFI…INLT), 5288–5332 (AVEE…YVFL), and 5368–5468 (IGFS…FVEL). A GAIN-B domain is found at 5747–5903 (SILALHWYPQ…AVYARTDNLS (157 aa)). 2 cysteine pairs are disulfide-bonded: C5856/C5885 and C5873/C5887. The GPS stretch occupies residues 5856-5903 (CLLWNQAAASWLSDSQFCKVVEETADYVECACSHMSVYAVYARTDNLS). Residues 5909–5929 (FFTSGFICISGLCLAVLSHIF) traverse the membrane as a helical segment. The Cytoplasmic portion of the chain corresponds to 5930 to 5939 (CARYSMFAAK). Residues 5940–5960 (LLTHMMAASLGTQILFLASAY) traverse the membrane as a helical segment. Over 5961–5979 (ASPQLAEESCSAMAAVTHY) the chain is Extracellular. Residues 5980-6000 (LYLCQFSWMLIQSVNFWYVLV) form a helical membrane-spanning segment. Residues 6001-6010 (MNDEHTERRY) are Cytoplasmic-facing. A helical transmembrane segment spans residues 6011–6031 (LLFFLLSWGLPAFVVILLIVI). Residues 6032 to 6059 (LKGIYHQSMSQIYGLIHGDLCFIPNVYA) are Extracellular-facing. Residues 6060 to 6080 (ALFTAALVPLTCLVVVFVVFI) form a helical membrane-spanning segment. The Cytoplasmic segment spans residues 6081-6104 (HAYQVKPQWKAYDDVFRGRTNAAE). The helical transmembrane segment at 6105 to 6125 (IPLILYLFALISVTWLWGGLH) threads the bilayer. At 6126–6133 (MAYRHFWM) the chain is on the extracellular side. Residues 6134–6154 (LVLFVIFNSLQGLYVFMVYFI) traverse the membrane as a helical segment. Topologically, residues 6155 to 6306 (LHNQMCCPMK…RRIPIADTHL (152 aa)) are cytoplasmic. Residues 6216–6248 (ASFQQGSQASPDLKPSPQNGATFPSSGGYGQGS) are disordered. Positions 6217 to 6240 (SFQQGSQASPDLKPSPQNGATFPS) are enriched in polar residues.

Belongs to the G-protein coupled receptor 2 family. Adhesion G-protein coupled receptor (ADGR) subfamily. Forms a heterodimer, consisting of a large extracellular region (alpha subunit) non-covalently linked to a seven-transmembrane moiety (beta subunit). Component of USH2 complex, composed of ADGRV1, PDZD7, USH2A and WHRN. Interacts with USH2A and WHRN. Interacts (via the cytoplasmic region) with PDZD7. Interacts (via the cytoplasmic region) with MYO7A (via MyTH4-FERM domains). Autoproteolytically cleaved into 2 subunits, an extracellular alpha subunit and a seven-transmembrane subunit. Expressed at low levels in adult tissues.

It localises to the cell membrane. It is found in the cell projection. Its subcellular location is the stereocilium membrane. The protein resides in the photoreceptor inner segment. In terms of biological role, G-protein coupled receptor which has an essential role in the development of hearing and vision. Couples to G-alpha(i)-proteins, GNAI1/2/3, G-alpha(q)-proteins, GNAQ, as well as G-alpha(s)-proteins, GNAS, inhibiting adenylate cyclase (AC) activity and cAMP production. Required for the hair bundle ankle formation, which connects growing stereocilia in developing cochlear hair cells of the inner ear. In response to extracellular calcium, activates kinases PKA and PKC to regulate myelination by inhibiting the ubiquitination of MAG, thus enhancing the stability of this protein in myelin-forming cells of the auditory pathway. In retina photoreceptors, the USH2 complex is required for the maintenance of periciliary membrane complex that seems to play a role in regulating intracellular protein transport. Involved in the regulation of bone metabolism. Its function is as follows. Cleaved ADGRV1 beta-subunit couples with G-alpha(i)-proteins, GNAI1/2/3, and constitutively inhibits adenylate cyclase (AC) activity with a stronger effect than full ADGRV1. This Homo sapiens (Human) protein is Adhesion G-protein coupled receptor V1.